A 468-amino-acid chain; its full sequence is Cysteine--tRNA ligase (468 aa).

Cysteine 33 contacts Zn(2+). The 'HIGH' region signature appears at 35 to 45; the sequence is ATVQGLPHIGH. Zn(2+) contacts are provided by cysteine 211, histidine 236, and glutamate 240. A 'KMSKS' region motif is present at residues 267 to 271; sequence KMSKS. An ATP-binding site is contributed by lysine 270.

The protein belongs to the class-I aminoacyl-tRNA synthetase family. Monomer. It depends on Zn(2+) as a cofactor.

The protein resides in the cytoplasm. It catalyses the reaction tRNA(Cys) + L-cysteine + ATP = L-cysteinyl-tRNA(Cys) + AMP + diphosphate. The polypeptide is Cysteine--tRNA ligase (Mycolicibacterium paratuberculosis (strain ATCC BAA-968 / K-10) (Mycobacterium paratuberculosis)).